A 350-amino-acid chain; its full sequence is uncharacterized protein (350 aa).

In terms of biological role, may play a role in septum formation. This is an uncharacterized protein from Mycobacterium tuberculosis (strain CDC 1551 / Oshkosh).